Here is a 276-residue protein sequence, read N- to C-terminus: MLMITSFANPRVAQAFVDYMATQGVILTIQQHNQSDVWLADESQAERVRAELARFLGNPADPRYLAASWQSGHTDSGLHYRRYPFFAALRERAGPVTWVMMIACVVVFIAMQILGDQEVMLWLAWPFDPTLKFEFWRYFTHALMHFSLMHILFNLLWWWYLGGAVEKRLGSGKLIVITLISALLSGYVQQKFSGPWFGGLSGVVYALMGYVWLRGERDPQSGIYLQRGLIIFALIWIVAGWFDLFGMSMANGAHIAGLAVGLAMAFVDSLNARKRK.

A run of 6 helical transmembrane segments spans residues 94–114, 142–162, 169–189, 192–212, 229–249, and 250–270; these read GPVTWVMMIACVVVFIAMQIL, ALMHFSLMHILFNLLWWWYLG, LGSGKLIVITLISALLSGYVQ, FSGPWFGGLSGVVYALMGYVW, LIIFALIWIVAGWFDLFGMSM, and ANGAHIAGLAVGLAMAFVDSL. S201 functions as the Nucleophile in the catalytic mechanism. Residue H254 is part of the active site.

The protein belongs to the peptidase S54 family.

Its subcellular location is the cell inner membrane. It carries out the reaction Cleaves type-1 transmembrane domains using a catalytic dyad composed of serine and histidine that are contributed by different transmembrane domains.. Its function is as follows. Rhomboid-type serine protease that catalyzes intramembrane proteolysis. This Escherichia coli O81 (strain ED1a) protein is Rhomboid protease GlpG.